Reading from the N-terminus, the 244-residue chain is Uridylate kinase (244 aa).

16–19 (KLSG) is an ATP binding site. A UMP-binding site is contributed by Gly-58. Gly-59 and Arg-63 together coordinate ATP. Residues Asp-78 and 139–146 (VGAPYFTT) each bind UMP. Positions 166, 172, and 175 each coordinate ATP.

The protein belongs to the UMP kinase family. Homohexamer.

Its subcellular location is the cytoplasm. The enzyme catalyses UMP + ATP = UDP + ADP. It functions in the pathway pyrimidine metabolism; CTP biosynthesis via de novo pathway; UDP from UMP (UMPK route): step 1/1. Its activity is regulated as follows. Inhibited by UTP. Catalyzes the reversible phosphorylation of UMP to UDP. The protein is Uridylate kinase of Novosphingobium aromaticivorans (strain ATCC 700278 / DSM 12444 / CCUG 56034 / CIP 105152 / NBRC 16084 / F199).